Consider the following 385-residue polypeptide: DGRVKIGHYILGDTLGVGTFGKRREIQNLKLFRHPHIIKLYQVISTPSDIFMVMEYVSGGELFDYICKNGRLDEKESRRLFQQILSGVDYCHRHMVVHRDLKPENVLLDAHMNAKIADFGLSNMMSDGEFLRTSCGSPNYAAPEVISGRLYAGPEVDIWSSGVILYALLCGTLPFDDDHVPTLFKKICDGIFYTPQYLNPSVISLLKHMLQVDPMKRATIKDIREHEWFKQDLPKYLFPEDPSYSXTMIDDEALKQDPLAVAYHLIIDNRDFYLATSPPDSFLDDHHLTRVPFLVAETPRDELNPQKXKHQGVRKAKXHLGIRQLDYEXKVVNPYYLRVRRKKMSLQLYQVDSRTYLLDFRSIDDXIDAEAQGKSSEASLTXSVT.

In terms of domain architecture, Protein kinase spans 1–229 (DGRVKIGHYI…IKDIREHEWF (229 aa)). Thr-14 bears the Phosphothreonine mark. An ATP-binding site is contributed by 15-22 (LGVGTFGK). The Proton acceptor role is filled by Asp-100. Thr-133 carries the post-translational modification Phosphothreonine; by LKB1 and CaMKK2. Phosphothreonine is present on residues Thr-219 and Thr-276. The AIS stretch occupies residues 252–297 (EALKQDPLAVAYHLIIDNRDFYLATSPPDSFLDDHHLTRVPFLVAE). Ser-277 carries the post-translational modification Phosphoserine. Ser-281 carries the post-translational modification Phosphoserine; by ULK1. Thr-289 carries the post-translational modification Phosphothreonine; by ULK1. At Thr-298 the chain carries Phosphothreonine. Phosphoserine is present on residues Ser-353 and Ser-383.

Belongs to the protein kinase superfamily. CAMK Ser/Thr protein kinase family. SNF1 subfamily. In terms of assembly, AMPK is a heterotrimer of an alpha catalytic subunit (PRKAA1 or PRKAA2), a beta (PRKAB1 or PRKAB2) and a gamma non-catalytic subunits (PRKAG1, PRKAG2 or PRKAG3). Interacts with FNIP1 and FNIP2. Mg(2+) is required as a cofactor. Post-translationally, ubiquitinated. Phosphorylated at Thr-133 by STK11/LKB1 in complex with STE20-related adapter-alpha (STRADA) pseudo kinase and CAB39. Also phosphorylated at Thr-133 by CAMKK2; triggered by a rise in intracellular calcium ions, without detectable changes in the AMP/ATP ratio. CAMKK1 can also phosphorylate Thr-133, but at a much lower level. Dephosphorylated by protein phosphatase 2A and 2C (PP2A and PP2C). Phosphorylated by ULK1 and ULK2; leading to negatively regulate AMPK activity and suggesting the existence of a regulatory feedback loop between ULK1, ULK2 and AMPK. Dephosphorylated by PPM1A and PPM1B. In terms of processing, glycosylated; O-GlcNAcylated by OGT, promoting the AMP-activated protein kinase (AMPK) activity.

It localises to the cytoplasm. Its subcellular location is the nucleus. The catalysed reaction is L-seryl-[protein] + ATP = O-phospho-L-seryl-[protein] + ADP + H(+). The enzyme catalyses L-threonyl-[protein] + ATP = O-phospho-L-threonyl-[protein] + ADP + H(+). It carries out the reaction L-seryl-[acetyl-CoA carboxylase] + ATP = O-phospho-L-seryl-[acetyl-CoA carboxylase] + ADP + H(+). It catalyses the reaction L-seryl-[3-hydroxy-3-methylglutaryl-coenzyme A reductase] + ATP = O-phospho-L-seryl-[3-hydroxy-3-methylglutaryl-coenzyme A reductase] + ADP + H(+). The catalysed reaction is L-seryl-[tau protein] + ATP = O-phospho-L-seryl-[tau protein] + ADP + H(+). The enzyme catalyses L-threonyl-[tau protein] + ATP = O-phospho-L-threonyl-[tau protein] + ADP + H(+). Its activity is regulated as follows. Activated by phosphorylation on Thr-133. Binding of AMP to non-catalytic gamma subunit (PRKAG1, PRKAG2 or PRKAG3) results in allosteric activation, inducing phosphorylation on Thr-133. AMP-binding to gamma subunit also sustains activity by preventing dephosphorylation of Thr-133. ADP also stimulates Thr-133 phosphorylation, without stimulating already phosphorylated AMPK. ATP promotes dephosphorylation of Thr-133, rendering the enzyme inactive. Under physiological conditions AMPK mainly exists in its inactive form in complex with ATP, which is much more abundant than AMP. Selectively inhibited by compound C (6-[4-(2-Piperidin-1-yl-ethoxy)-phenyl)]-3-pyridin-4-yl-pyyrazolo[1,5-a] pyrimidine. Activated by resveratrol, a natural polyphenol present in red wine, and S17834, a synthetic polyphenol. Functionally, catalytic subunit of AMP-activated protein kinase (AMPK), an energy sensor protein kinase that plays a key role in regulating cellular energy metabolism. In response to reduction of intracellular ATP levels, AMPK activates energy-producing pathways and inhibits energy-consuming processes: inhibits protein, carbohydrate and lipid biosynthesis, as well as cell growth and proliferation. AMPK acts via direct phosphorylation of metabolic enzymes, and by longer-term effects via phosphorylation of transcription regulators. Regulates lipid synthesis by phosphorylating and inactivating lipid metabolic enzymes such as ACACA, ACACB, GYS1, HMGCR and LIPE; regulates fatty acid and cholesterol synthesis by phosphorylating acetyl-CoA carboxylase (ACACA and ACACB) and hormone-sensitive lipase (LIPE) enzymes, respectively. Promotes lipolysis of lipid droplets by mediating phosphorylation of isoform 1 of CHKA (CHKalpha2). Regulates insulin-signaling and glycolysis by phosphorylating IRS1, PFKFB2 and PFKFB3. AMPK stimulates glucose uptake in muscle by increasing the translocation of the glucose transporter SLC2A4/GLUT4 to the plasma membrane, possibly by mediating phosphorylation of TBC1D4/AS160. Regulates transcription and chromatin structure by phosphorylating transcription regulators involved in energy metabolism such as CRTC2/TORC2, FOXO3, histone H2B, HDAC5, MEF2C, MLXIPL/ChREBP, EP300, HNF4A, p53/TP53, SREBF1, SREBF2 and PPARGC1A. Acts as a key regulator of glucose homeostasis in liver by phosphorylating CRTC2/TORC2, leading to CRTC2/TORC2 sequestration in the cytoplasm. In response to stress, phosphorylates 'Ser-36' of histone H2B (H2BS36ph), leading to promote transcription. Acts as a key regulator of cell growth and proliferation by phosphorylating FNIP1, TSC2, RPTOR, WDR24 and ATG1/ULK1: in response to nutrient limitation, negatively regulates the mTORC1 complex by phosphorylating RPTOR component of the mTORC1 complex and by phosphorylating and activating TSC2. Also phosphorylates and inhibits GATOR2 subunit WDR24 in response to nutrient limitation, leading to suppress glucose-mediated mTORC1 activation. In response to energetic stress, phosphorylates FNIP1, inactivating the non-canonical mTORC1 signaling, thereby promoting nuclear translocation of TFEB and TFE3, and inducing transcription of lysosomal or autophagy genes. In response to nutrient limitation, promotes autophagy by phosphorylating and activating ATG1/ULK1. In that process also activates WDR45/WIPI4. Phosphorylates CASP6, thereby preventing its autoprocessing and subsequent activation. In response to nutrient limitation, phosphorylates transcription factor FOXO3 promoting FOXO3 mitochondrial import. Also acts as a regulator of cellular polarity by remodeling the actin cytoskeleton; probably by indirectly activating myosin. AMPK also acts as a regulator of circadian rhythm by mediating phosphorylation of CRY1, leading to destabilize it. May regulate the Wnt signaling pathway by phosphorylating CTNNB1, leading to stabilize it. Also has tau-protein kinase activity: in response to amyloid beta A4 protein (APP) exposure, activated by CAMKK2, leading to phosphorylation of MAPT/TAU; however the relevance of such data remains unclear in vivo. Also phosphorylates CFTR, EEF2K, KLC1, NOS3 and SLC12A1. Regulates hepatic lipogenesis. Activated via SIRT3, represses sterol regulatory element-binding protein (SREBP) transcriptional activities and ATP-consuming lipogenesis to restore cellular energy balance. Upon stress, regulates mitochondrial fragmentation through phosphorylation of MTFR1L. In Sus scrofa (Pig), this protein is 5'-AMP-activated protein kinase catalytic subunit alpha-1 (PRKAA1).